The sequence spans 470 residues: 24-hydroxycholesterol 7-alpha-hydroxylase (470 aa).

A run of 2 helical transmembrane segments spans residues 3–23 and 270–290; these read IMEL…LFLF and VVLW…LGYI. Residue C415 coordinates heme.

The protein belongs to the cytochrome P450 family. Heme serves as cofactor. Liver specific. Hepatic expression is sexually dimorphic (female &gt; male).

The protein localises to the endoplasmic reticulum membrane. Its subcellular location is the microsome membrane. It carries out the reaction (24S)-hydroxycholesterol + reduced [NADPH--hemoprotein reductase] + O2 = (24S)-7alpha-dihydroxycholesterol + oxidized [NADPH--hemoprotein reductase] + H2O + H(+). It participates in steroid metabolism; cholesterol degradation. Its pathway is lipid metabolism; bile acid biosynthesis. Functionally, a cytochrome P450 monooxygenase involved in neural cholesterol clearance through bile acid synthesis. Catalyzes 7-alpha hydroxylation of (24S)-hydroxycholesterol, a neural oxysterol that is metabolized to bile acids in the liver. Mechanistically, uses molecular oxygen inserting one oxygen atom into a substrate, and reducing the second into a water molecule, with two electrons provided by NADPH via cytochrome P450 reductase (CPR; NADPH-ferrihemoprotein reductase). This Mus musculus (Mouse) protein is 24-hydroxycholesterol 7-alpha-hydroxylase (Cyp39a1).